Consider the following 868-residue polypeptide: Leucine--tRNA ligase (868 aa).

A 'HIGH' region motif is present at residues 42–52; sequence PYPSGKLHMGH. The short motif at 627-631 is the 'KMSKS' region element; sequence KMSKS. Lys-630 provides a ligand contact to ATP.

It belongs to the class-I aminoacyl-tRNA synthetase family.

It localises to the cytoplasm. It carries out the reaction tRNA(Leu) + L-leucine + ATP = L-leucyl-tRNA(Leu) + AMP + diphosphate. The polypeptide is Leucine--tRNA ligase (Pseudomonas putida (strain GB-1)).